The chain runs to 224 residues: Cerebellin-2 (224 aa).

Residues 1–51 form the signal peptide; that stretch reads MQAPGRGPLGLRLMMPGRRGALREPGGCGSCLGVALALLLLLLPACCPVRA. Residues Asn53 and Asn110 are each glycosylated (N-linked (GlcNAc...) asparagine). Positions 88–224 constitute a C1q domain; the sequence is SGSAKVAFSA…TFSGFLVFPL (137 aa).

Homohexamer; disulfide-linked homotrimers. The trimers are assembled via the globular C1q domains. The trimers associate via N-terminal cysteine residues to form disulfide-linked hexamers. May form homooligomers or heterooligomers with CBLN1 and CBLN3 prior to secretion. Once secreted, does not interact with other CBLN family members. Interacts with GRID2, and more weakly with GRID1. Interacts with NRXN1 and NRXN2 long and short isoforms produced by alternative promoter usage. Weakly interacts with NRXN3 short isoform and not at all with NRXN3 long isoform.

It is found in the secreted. Functionally, acts as a synaptic organizer in specific subsets of neurons in the brain. Essential for long-term maintenance but not establishment of excitatory synapses. Functions as part of a trans-synaptic complex by binding to postsynaptic GRID1 and presynaptic neurexins. This interaction helps regulate the activity of NMDA and AMPA receptors at hippocampal synapses without affecting synapse formation. NRXN1B-CBLN2-GRID1 complex transduce presynaptic signals into postsynaptic NMDAR response. NRXN3B-CBLN2-GRID1 complex transduce presynaptic signals into postsynaptic AMPAR response. This chain is Cerebellin-2, found in Homo sapiens (Human).